The primary structure comprises 363 residues: NAD(P)H-quinone oxidoreductase subunit 1, chloroplastic (363 aa).

6 helical membrane-spanning segments follow: residues 28–48 (WVLVPILTTVLGITIGVLVIV), 98–118 (FSIGPSIAVISILLSYSVIPF), 127–147 (LPIGVFLWIAISSVAPIGLLM), 248–268 (YSGIKFGLFYVASYLNLLVSS), 300–320 (VFGMTISIFITLAKTYLFLFI), and 343–363 (FLLPISLGNLLLTTSFQLFSL).

It belongs to the complex I subunit 1 family. As to quaternary structure, NDH is composed of at least 16 different subunits, 5 of which are encoded in the nucleus.

Its subcellular location is the plastid. It is found in the chloroplast thylakoid membrane. It carries out the reaction a plastoquinone + NADH + (n+1) H(+)(in) = a plastoquinol + NAD(+) + n H(+)(out). The catalysed reaction is a plastoquinone + NADPH + (n+1) H(+)(in) = a plastoquinol + NADP(+) + n H(+)(out). Functionally, NDH shuttles electrons from NAD(P)H:plastoquinone, via FMN and iron-sulfur (Fe-S) centers, to quinones in the photosynthetic chain and possibly in a chloroplast respiratory chain. The immediate electron acceptor for the enzyme in this species is believed to be plastoquinone. Couples the redox reaction to proton translocation, and thus conserves the redox energy in a proton gradient. The sequence is that of NAD(P)H-quinone oxidoreductase subunit 1, chloroplastic from Cucumis sativus (Cucumber).